Consider the following 217-residue polypeptide: Claudin-9 (217 aa).

Residues 1 to 7 (MASTGLE) are Cytoplasmic-facing. A helical transmembrane segment spans residues 8-28 (LLGMTLAVLGWLGTLVSCALP). Residues 29–81 (LWKVTAFIGNSIVVAQVVWEGLWMSCVVQSTGQMQCKVYDSLLALPQDLQAAR) lie on the Extracellular side of the membrane. Residues 82 to 102 (ALCVIALLLALLGLLVAITGA) traverse the membrane as a helical segment. The Cytoplasmic portion of the chain corresponds to 103-116 (QCTTCVEDEGAKAR). The helical transmembrane segment at 117-137 (IVLTAGVILLLAGILVLIPVC) threads the bilayer. Topologically, residues 138-159 (WTAHAIIQDFYNPLVAEALKRE) are extracellular. Residues 160-180 (LGASLYLGWAAAALLMLGGGL) form a helical membrane-spanning segment. Over 181 to 217 (LCCTCPPPQVERPRGPRLGYSIPSRSGASGLDKRDYV) the chain is Cytoplasmic. The tract at residues 194–217 (RGPRLGYSIPSRSGASGLDKRDYV) is disordered.

This sequence belongs to the claudin family. In terms of assembly, interacts with CLDN1, CD81 and OCLN. As to expression, expressed in the liver, in peripheral blood mononuclear cells and hepatocarcinoma cell lines.

The protein localises to the cell junction. The protein resides in the tight junction. It is found in the cell membrane. Functionally, plays a major role in tight junction-specific obliteration of the intercellular space, through calcium-independent cell-adhesion activity. Its function is as follows. (Microbial infection) Acts as a receptor for hepatitis C virus (HCV) entry into hepatic cells. In Homo sapiens (Human), this protein is Claudin-9 (CLDN9).